A 114-amino-acid chain; its full sequence is Large ribosomal subunit protein uL22 (114 aa).

It belongs to the universal ribosomal protein uL22 family. Part of the 50S ribosomal subunit.

This protein binds specifically to 23S rRNA; its binding is stimulated by other ribosomal proteins, e.g. L4, L17, and L20. It is important during the early stages of 50S assembly. It makes multiple contacts with different domains of the 23S rRNA in the assembled 50S subunit and ribosome. Functionally, the globular domain of the protein is located near the polypeptide exit tunnel on the outside of the subunit, while an extended beta-hairpin is found that lines the wall of the exit tunnel in the center of the 70S ribosome. The chain is Large ribosomal subunit protein uL22 from Myxococcus xanthus (strain DK1622).